A 61-amino-acid polypeptide reads, in one-letter code: uncharacterized protein (61 aa).

The signal sequence occupies residues 1–30; that stretch reads MDVEVANMAAKLRVRGLKLPNAIVVSTAIL.

This is an uncharacterized protein from Archaeoglobus fulgidus (strain ATCC 49558 / DSM 4304 / JCM 9628 / NBRC 100126 / VC-16).